Consider the following 311-residue polypeptide: Acetyl-coenzyme A carboxylase carboxyl transferase subunit alpha (311 aa).

Residues 36-286 (KLEKEVEKTF…KEYFIKSLAE (251 aa)) enclose the CoA carboxyltransferase C-terminal domain.

This sequence belongs to the AccA family. In terms of assembly, acetyl-CoA carboxylase is a heterohexamer composed of biotin carboxyl carrier protein (AccB), biotin carboxylase (AccC) and two subunits each of ACCase subunit alpha (AccA) and ACCase subunit beta (AccD).

It localises to the cytoplasm. The catalysed reaction is N(6)-carboxybiotinyl-L-lysyl-[protein] + acetyl-CoA = N(6)-biotinyl-L-lysyl-[protein] + malonyl-CoA. The protein operates within lipid metabolism; malonyl-CoA biosynthesis; malonyl-CoA from acetyl-CoA: step 1/1. In terms of biological role, component of the acetyl coenzyme A carboxylase (ACC) complex. First, biotin carboxylase catalyzes the carboxylation of biotin on its carrier protein (BCCP) and then the CO(2) group is transferred by the carboxyltransferase to acetyl-CoA to form malonyl-CoA. The chain is Acetyl-coenzyme A carboxylase carboxyl transferase subunit alpha from Aliarcobacter butzleri (strain RM4018) (Arcobacter butzleri).